The following is a 430-amino-acid chain: Phosphoglucosamine mutase (430 aa).

Residue serine 93 is the Phosphoserine intermediate of the active site. Residues serine 93, aspartate 227, aspartate 229, and aspartate 231 each coordinate Mg(2+). Serine 93 carries the phosphoserine modification.

Belongs to the phosphohexose mutase family. Requires Mg(2+) as cofactor. Post-translationally, activated by phosphorylation.

The catalysed reaction is alpha-D-glucosamine 1-phosphate = D-glucosamine 6-phosphate. Catalyzes the conversion of glucosamine-6-phosphate to glucosamine-1-phosphate. In Thermosipho africanus (strain TCF52B), this protein is Phosphoglucosamine mutase.